The primary structure comprises 127 residues: Large ribosomal subunit protein bL12 (127 aa).

The tract at residues 101-127 (VKTGVSKEEAEDAKKQLVESGAEVEIK) is disordered. A compositionally biased stretch (basic and acidic residues) spans 105–117 (VSKEEAEDAKKQL).

It belongs to the bacterial ribosomal protein bL12 family. As to quaternary structure, homodimer. Part of the ribosomal stalk of the 50S ribosomal subunit. Forms a multimeric L10(L12)X complex, where L10 forms an elongated spine to which 2 to 4 L12 dimers bind in a sequential fashion. Binds GTP-bound translation factors.

Forms part of the ribosomal stalk which helps the ribosome interact with GTP-bound translation factors. Is thus essential for accurate translation. This Geobacter metallireducens (strain ATCC 53774 / DSM 7210 / GS-15) protein is Large ribosomal subunit protein bL12.